The chain runs to 1347 residues: Protocadherin-11 X-linked (1347 aa).

An N-terminal signal peptide occupies residues Met1–Ala23. The Extracellular segment spans residues Gln24 to Lys812. Cadherin domains follow at residues Lys26–Phe139, Pro140–Phe249, Lys250–Ile355, Asn362–Phe466, Thr467–Phe570, Thr571–Phe673, and Pro677–Thr795. N-linked (GlcNAc...) asparagine glycosylation is found at Asn27, Asn48, and Asn54. Asn344 is a glycosylation site (N-linked (GlcNAc...) asparagine). Asn553 carries an N-linked (GlcNAc...) asparagine glycan. Asn773 carries N-linked (GlcNAc...) asparagine glycosylation. A helical transmembrane segment spans residues Ile813–Val833. The Cytoplasmic portion of the chain corresponds to Val834 to Leu1347. Disordered stretches follow at residues Ile1031 to Gln1050, Leu1057 to Gln1091, Arg1097 to Phe1116, and Thr1325 to Leu1347.

It is found in the cell membrane. Potential calcium-dependent cell-adhesion protein. The polypeptide is Protocadherin-11 X-linked (PCDH11X) (Pongo pygmaeus (Bornean orangutan)).